The chain runs to 76 residues: Small ribosomal subunit protein bS16 (76 aa).

This sequence belongs to the bacterial ribosomal protein bS16 family.

This Sulfurovum sp. (strain NBC37-1) protein is Small ribosomal subunit protein bS16.